The primary structure comprises 186 residues: MTGQRIGYIRVSTFDQNPERQLEGVKVDRAFSDKASGKDVKRPQLEALISFARTGDTVVVHSMDRLARNLDDLRRIVQTLTQRGVHIEFVKEHLSFTGEDSPMANLMLSVMGAFAEFERALIRERQREGIALAKQRGAYRGRKKSLSSERIAELRQRVEAGEQKTKLAREFGISRETLYQYLRTDQ.

The region spanning 4 to 137 (QRIGYIRVST…EGIALAKQRG (134 aa)) is the Resolvase/invertase-type recombinase catalytic domain. Ser-12 serves as the catalytic O-(5'-phospho-DNA)-serine intermediate. The H-T-H motif DNA-binding region spans 164 to 183 (KTKLAREFGISRETLYQYLR).

This sequence belongs to the site-specific recombinase resolvase family.

Its function is as follows. Resolvase catalyzes the resolution (a site-specific recombination) of the cointegrated replicon to yield the final transposition products. In Escherichia coli, this protein is Transposon Tn21 resolvase (tnpR).